The following is a 624-amino-acid chain: Altered inheritance of mitochondria protein 9, mitochondrial (624 aa).

The transit peptide at 1–34 (MLSRVARCSRTLNQVTRNGQSGLFSAVLRTSIRQ) directs the protein to the mitochondrion.

This sequence belongs to the AIM9 family.

Its subcellular location is the mitochondrion. The protein is Altered inheritance of mitochondria protein 9, mitochondrial (AIM9) of Candida albicans (strain WO-1) (Yeast).